A 154-amino-acid polypeptide reads, in one-letter code: Large ribosomal subunit protein uL30 (154 aa).

This sequence belongs to the universal ribosomal protein uL30 family. Part of the 50S ribosomal subunit.

The sequence is that of Large ribosomal subunit protein uL30 from Methanococcus vannielii.